A 504-amino-acid chain; its full sequence is Procardosin-A (504 aa).

The first 24 residues, 1-24, serve as a signal peptide directing secretion; sequence MGTSIKANVLALFLFYLLSPTVFS. A propeptide spanning residues 25-68 is cleaved from the precursor; that stretch reads VSDDGLIRIGLKKRKVDRIDQLRGRRALMEGNARKDFGFRGTVR. Positions 85–501 constitute a Peptidase A1 domain; the sequence is YFGEIGIGTP…DYGNLLVGFA (417 aa). Residue D103 is part of the active site. C116 and C122 are oxidised to a cystine. N139 is a glycosylation site (N-linked (GlcNAc...) asparagine). The RGD motif signature appears at 246 to 248; sequence RGD. Cysteines 277 and 281 form a disulfide. The active site involves D286. Positions 310–414 are cleaved as a propeptide — plant-specific insert; that stretch reads GVMNQQCKTV…YANELCEHLS (105 aa). The Saposin B-type domain maps to 311-416; the sequence is VMNQQCKTVV…NELCEHLSTS (106 aa). 4 disulfides stabilise this stretch: C316/C410, C341/C382, C347/C379, and C424/C461. The N-linked (GlcNAc...) asparagine glycan is linked to N432. The KGE motif signature appears at 455–457; the sequence is KGE.

It belongs to the peptidase A1 family. Heterodimer of a light chain and a heavy chain. An intermediate form (35 kDa and 30 kDa subunits) is produced first, and undergoes proteolytic processing to remove the internal plant-specific insert (PSI) and the propeptide. There is some heterogeniety at the cleavage site. Interacts (via RGD or KGE motifs) with PLD1 (via C2 domain). N-glycosylated. Glycans found at Asn-139 include approximately 6% oligomannose, 82% oligosaccharides of the plant modified type with proximal fucose but without xylose and 6% oligosaccharides of the plant modified type with proximal fucose and xylose. Glycans found at Asn-432 include 14% oligosaccharides of the plant modified type with proximal fucose but without xylose and 86% oligosaccharides of the plant modified type with proximal fucose and xylose. In terms of tissue distribution, detected only in pistils, not in seeds, roots, midribs, bracts, stamens, pollen, vascular or supporting tissues. Detected in seeds. High amounts are detected in the broad outer region of the upper portion of the stigma, towards the lower portion of the stigma it accumulates at the periphery. Within the stigma, expressed mainly in the epidermic papillae, lower levels are found in the cortical parenchyma. Present mainly in epidermal cells within the stye (at protein level). Expressed in young flower buds, and at lower levels in seeds, pollen and bracteas, but not in roots or leaves.

The protein localises to the microsome membrane. It localises to the protein storage vacuole. Its subcellular location is the secreted. The protein resides in the cell wall. It is found in the extracellular space. The protein localises to the extracellular matrix. Its activity is regulated as follows. Inhibited by the specific aspartic proteinase inhibitors diazoacetyl-noleucine methyl ester and pepstatin. Aspartic proteinase with a high preference for bonds between hydrophobic residues. Cleaves alpha-lactalbumin but not beta-lactoglobulin. This Cynara cardunculus (Cardoon) protein is Procardosin-A.